The sequence spans 846 residues: Translation initiation factor IF-2 (846 aa).

Residues Tyr-198 to Lys-219 form a disordered region. Over residues Ser-207–Lys-219 the composition is skewed to basic residues. Residues Ser-345–Glu-512 enclose the tr-type G domain. The segment at Gly-354–Thr-361 is G1. Position 354–361 (Gly-354–Thr-361) interacts with GTP. Positions Gly-379–His-383 are G2. A G3 region spans residues Asp-400–Gly-403. Residues Asp-400–His-404 and Asn-454–Asp-457 contribute to the GTP site. The interval Asn-454–Asp-457 is G4. The tract at residues Ser-490–Lys-492 is G5.

This sequence belongs to the TRAFAC class translation factor GTPase superfamily. Classic translation factor GTPase family. IF-2 subfamily.

Its subcellular location is the cytoplasm. In terms of biological role, one of the essential components for the initiation of protein synthesis. Protects formylmethionyl-tRNA from spontaneous hydrolysis and promotes its binding to the 30S ribosomal subunits. Also involved in the hydrolysis of GTP during the formation of the 70S ribosomal complex. The chain is Translation initiation factor IF-2 from Francisella tularensis subsp. holarctica (strain OSU18).